The primary structure comprises 402 residues: Tol-Pal system protein TolB (402 aa).

The first 17 residues, 1–17 (MKKIVAIFLVFLGSLWA), serve as a signal peptide directing secretion.

This sequence belongs to the TolB family. The Tol-Pal system is composed of five core proteins: the inner membrane proteins TolA, TolQ and TolR, the periplasmic protein TolB and the outer membrane protein Pal. They form a network linking the inner and outer membranes and the peptidoglycan layer.

It is found in the periplasm. Its function is as follows. Part of the Tol-Pal system, which plays a role in outer membrane invagination during cell division and is important for maintaining outer membrane integrity. The protein is Tol-Pal system protein TolB of Campylobacter jejuni (strain RM1221).